The primary structure comprises 145 residues: UPF0735 ACT domain-containing protein CPE1414 (145 aa).

In terms of domain architecture, ACT spans 69 to 144 (IFNMVVTHEK…GVEKVEFVAM (76 aa)).

The protein belongs to the UPF0735 family.

In Clostridium perfringens (strain 13 / Type A), this protein is UPF0735 ACT domain-containing protein CPE1414.